The primary structure comprises 187 residues: Peptide deformylase (187 aa).

2 residues coordinate Fe cation: cysteine 107 and histidine 149. Residue glutamate 150 is part of the active site. Histidine 153 lines the Fe cation pocket.

This sequence belongs to the polypeptide deformylase family. Requires Fe(2+) as cofactor.

It catalyses the reaction N-terminal N-formyl-L-methionyl-[peptide] + H2O = N-terminal L-methionyl-[peptide] + formate. Its function is as follows. Removes the formyl group from the N-terminal Met of newly synthesized proteins. Requires at least a dipeptide for an efficient rate of reaction. N-terminal L-methionine is a prerequisite for activity but the enzyme has broad specificity at other positions. This chain is Peptide deformylase, found in Picosynechococcus sp. (strain ATCC 27264 / PCC 7002 / PR-6) (Agmenellum quadruplicatum).